Consider the following 235-residue polypeptide: UPF0749 protein YlxX (235 aa).

Residues 6–26 traverse the membrane as a helical segment; sequence SFISISVLMVIFGLMISVQFN.

The protein belongs to the UPF0749 family.

It localises to the cell membrane. The protein is UPF0749 protein YlxX (ylxX) of Bacillus subtilis (strain 168).